A 423-amino-acid chain; its full sequence is Gamma-glutamyl phosphate reductase (423 aa).

The protein belongs to the gamma-glutamyl phosphate reductase family.

The protein localises to the cytoplasm. It catalyses the reaction L-glutamate 5-semialdehyde + phosphate + NADP(+) = L-glutamyl 5-phosphate + NADPH + H(+). Its pathway is amino-acid biosynthesis; L-proline biosynthesis; L-glutamate 5-semialdehyde from L-glutamate: step 2/2. Its function is as follows. Catalyzes the NADPH-dependent reduction of L-glutamate 5-phosphate into L-glutamate 5-semialdehyde and phosphate. The product spontaneously undergoes cyclization to form 1-pyrroline-5-carboxylate. The polypeptide is Gamma-glutamyl phosphate reductase (Pseudomonas putida (strain ATCC 47054 / DSM 6125 / CFBP 8728 / NCIMB 11950 / KT2440)).